Reading from the N-terminus, the 414-residue chain is MNVLVLNAGSSSLKFQIIATDLERIQRDSDERLCHGYVERIGGEAIITVEPRGGPRKKVTAPVRNIAAALDYVLRWLASDQSGVAEIRSLSDVHAVGHRVVHGGEVFRESAVITDEVLQGIEDCIDLAPLHNPNNIKGILAARDAFGSGMPQVAVFDTAFHTSLPDHAYLYAMPYHLYARHRIRRYGFHGTSNRYVAYRYRTLRQLTREQTNIITLHLGNGCSATAIRNGRSMDTSMGMTPLEGLVMGTRSGDLDPAILSLIATKEGLSPTEVEALLNTQCGLLGISGVTNDMKVLLQELREHDDRRIRLAIEIFCYRARKYIGALLACMGGADAVIFTGGIGENAPEIRARICAGLEWAGLEIDSDQNAQTMGRPQQISKPESRLQAWVIPTDEELLIARDTVRCILGEPHPA.

Asparagine 7 is a binding site for Mg(2+). An ATP-binding site is contributed by lysine 14. Residue arginine 99 participates in substrate binding. Aspartate 157 functions as the Proton donor/acceptor in the catalytic mechanism. Residues histidine 217 to glycine 221 and glycine 341 to asparagine 345 each bind ATP. Residue glutamate 395 participates in Mg(2+) binding.

This sequence belongs to the acetokinase family. In terms of assembly, homodimer. The cofactor is Mg(2+). It depends on Mn(2+) as a cofactor.

Its subcellular location is the cytoplasm. The enzyme catalyses acetate + ATP = acetyl phosphate + ADP. The protein operates within metabolic intermediate biosynthesis; acetyl-CoA biosynthesis; acetyl-CoA from acetate: step 1/2. Functionally, catalyzes the formation of acetyl phosphate from acetate and ATP. Can also catalyze the reverse reaction. The sequence is that of Acetate kinase from Solibacter usitatus (strain Ellin6076).